The sequence spans 201 residues: Recombination protein RecR (201 aa).

The segment at 57–72 (CADCRTFTEQEVCNIC) adopts a C4-type zinc-finger fold. A Toprim domain is found at 81–176 (GQICVVESPA…EASRIAHGVP (96 aa)).

Belongs to the RecR family.

May play a role in DNA repair. It seems to be involved in an RecBC-independent recombinational process of DNA repair. It may act with RecF and RecO. The sequence is that of Recombination protein RecR from Shigella boydii serotype 4 (strain Sb227).